The primary structure comprises 98 residues: Large ribosomal subunit protein uL23 (98 aa).

It belongs to the universal ribosomal protein uL23 family. As to quaternary structure, part of the 50S ribosomal subunit. Contacts protein L29, and trigger factor when it is bound to the ribosome.

Functionally, one of the early assembly proteins it binds 23S rRNA. One of the proteins that surrounds the polypeptide exit tunnel on the outside of the ribosome. Forms the main docking site for trigger factor binding to the ribosome. This chain is Large ribosomal subunit protein uL23, found in Nitrobacter winogradskyi (strain ATCC 25391 / DSM 10237 / CIP 104748 / NCIMB 11846 / Nb-255).